The sequence spans 338 residues: Methionyl-tRNA formyltransferase (338 aa).

110-113 (SLLP) contacts (6S)-5,6,7,8-tetrahydrofolate.

This sequence belongs to the Fmt family.

The enzyme catalyses L-methionyl-tRNA(fMet) + (6R)-10-formyltetrahydrofolate = N-formyl-L-methionyl-tRNA(fMet) + (6S)-5,6,7,8-tetrahydrofolate + H(+). In terms of biological role, attaches a formyl group to the free amino group of methionyl-tRNA(fMet). The formyl group appears to play a dual role in the initiator identity of N-formylmethionyl-tRNA by promoting its recognition by IF2 and preventing the misappropriation of this tRNA by the elongation apparatus. This is Methionyl-tRNA formyltransferase from Synechococcus sp. (strain CC9902).